The sequence spans 149 residues: Large ribosomal subunit protein uL24 (149 aa).

The disordered stretch occupies residues 114 to 149 (RKIIERSGGTPEVEAVPEKSEEEKEEKEKEEEKSEE). The span at 129–149 (VPEKSEEEKEEKEKEEEKSEE) shows a compositional bias: basic and acidic residues.

It belongs to the universal ribosomal protein uL24 family. In terms of assembly, part of the 50S ribosomal subunit.

Its function is as follows. One of two assembly initiator proteins, it binds directly to the 5'-end of the 23S rRNA, where it nucleates assembly of the 50S subunit. Located at the polypeptide exit tunnel on the outside of the subunit. The chain is Large ribosomal subunit protein uL24 from Methanopyrus kandleri (strain AV19 / DSM 6324 / JCM 9639 / NBRC 100938).